The primary structure comprises 85 residues: Large ribosomal subunit protein bL27 (85 aa).

The segment at 1-22 is disordered; it reads MAHKKGQGSTQNNRDSAGRRLG.

It belongs to the bacterial ribosomal protein bL27 family.

The polypeptide is Large ribosomal subunit protein bL27 (Sulfurimonas denitrificans (strain ATCC 33889 / DSM 1251) (Thiomicrospira denitrificans (strain ATCC 33889 / DSM 1251))).